We begin with the raw amino-acid sequence, 278 residues long: MDPWPWLTAALLLLLLLVQLSRTARFYAKVGLYCVLCLSFSAAASIVCLLRHGGRTVDNMSIISWFVRSFKYVYGLRFEVSGQKKLEVDGPCVIISNHQSILDMMGLMEILPKRCVQIAKRELMFTGPVGLIMYLGGVYFINRQQARTAMSVMADLGDLMVKENLKVWIYPEGTRNDNGDLLPFKKGAFYLAIQAQVPIIPVVYSSFSSFYNVKTKLFTSGTIKVQVLDAVPTNGLTDADVTKLVDTCYQSMRATFLQISQIPQENSAIKEPGVLPAQ.

Residues 1-23 form the signal peptide; it reads MDPWPWLTAALLLLLLLVQLSRT. At 24–29 the chain is on the lumenal side; it reads ARFYAK. The helical transmembrane segment at 30-50 threads the bilayer; the sequence is VGLYCVLCLSFSAAASIVCLL. The Cytoplasmic portion of the chain corresponds to 51–121; the sequence is RHGGRTVDNM…PKRCVQIAKR (71 aa). The HXXXXD motif signature appears at 98–103; the sequence is HQSILD. A helical transmembrane segment spans residues 122–142; sequence ELMFTGPVGLIMYLGGVYFIN. At 143–278 the chain is on the lumenal side; it reads RQQARTAMSV…IKEPGVLPAQ (136 aa). An EGTR motif motif is present at residues 172 to 175; sequence EGTR.

This sequence belongs to the 1-acyl-sn-glycerol-3-phosphate acyltransferase family. Expressed at high levels in the liver, at intermediate levels in the kidney, gut, heart and skeletal muscles. Undetectable in brain and spleen.

It is found in the endoplasmic reticulum membrane. The enzyme catalyses a 1-acyl-sn-glycero-3-phosphate + an acyl-CoA = a 1,2-diacyl-sn-glycero-3-phosphate + CoA. The catalysed reaction is 1-(9Z-octadecenoyl)-sn-glycero-3-phosphate + (9Z)-octadecenoyl-CoA = 1,2-di-(9Z-octadecenoyl)-sn-glycero-3-phosphate + CoA. It carries out the reaction 1-(9Z-octadecenoyl)-sn-glycero-3-phosphate + hexadecanoyl-CoA = 1-(9Z)-octadecenoyl-2-hexadecanoyl-sn-glycero-3-phosphate + CoA. It catalyses the reaction heptadecanoyl-CoA + 1-(9Z-octadecenoyl)-sn-glycero-3-phosphate = 1-(9Z)-octadecenoyl-2-heptadecanoyl-sn-glycero-3-phosphate + CoA. The enzyme catalyses 1-(9Z-octadecenoyl)-sn-glycero-3-phosphate + (9Z,12Z)-octadecadienoyl-CoA = 1-(9Z)-octadecenoyl-2-(9Z,12Z)-octadecadienoyl-sn-glycero-3-phosphate + CoA. The catalysed reaction is 1-(9Z-octadecenoyl)-sn-glycero-3-phosphate + tetradecanoyl-CoA = 1-(9Z)-octadecenoyl-2-tetradecanoyl-sn-glycero-3-phosphate + CoA. It carries out the reaction pentadecanoyl-CoA + 1-(9Z-octadecenoyl)-sn-glycero-3-phosphate = 1-(9Z)-octadecenoyl-2-pentadecanoyl-sn-glycero-3-phosphate + CoA. It catalyses the reaction 1-hexadecanoyl-sn-glycero-3-phosphate + (9Z)-octadecenoyl-CoA = 1-hexadecanoyl-2-(9Z-octadecenoyl)-sn-glycero-3-phosphate + CoA. The enzyme catalyses 1-tetradecanoyl-sn-glycerol 3-phosphate + (9Z)-octadecenoyl-CoA = 1-tetradecanoyl-2-(9Z)-octadecenoyl-sn-glycero-3-phosphate + CoA. The catalysed reaction is 1-(9Z,12Z,15Z)-octadecatrienoyl-sn-glycero-3-phosphate + (9Z)-octadecenoyl-CoA = 1-(9Z,12Z,15Z)-octadecatrienoyl-2-(9Z)-octadecenoyl-sn-glycero-3-phosphate + CoA. It carries out the reaction 1-(6Z,9Z,12Z-octadecatrienoyl)-sn-glycero-3-phosphate + (9Z)-octadecenoyl-CoA = (6Z,9Z,12Z)-octadecatrienoyl-2-(9Z)-octadecenoyl-sn-glycero-3-phosphate + CoA. It catalyses the reaction 1-eicosanoyl-sn-glycero-3-phosphate + (9Z)-octadecenoyl-CoA = 1-eicosanoyl-2-(9Z)-octadecenoyl-sn-glycero-3-phosphate + CoA. The enzyme catalyses 1-hexadecanoyl-sn-glycero-3-phosphate + octadecanoyl-CoA = 1-hexadecanoyl-2-octadecanoyl-sn-glycero-3-phosphate + CoA. The catalysed reaction is 1-hexadecanoyl-sn-glycero-3-phosphate + (5Z,8Z,11Z,14Z)-eicosatetraenoyl-CoA = 1-hexadecanoyl-2-(5Z,8Z,11Z,14Z-eicosatetraenoyl)-sn-glycero-3-phosphate + CoA. It carries out the reaction 1-hexadecanoyl-sn-glycero-3-phosphate + hexadecanoyl-CoA = 1,2-dihexadecanoyl-sn-glycero-3-phosphate + CoA. It catalyses the reaction 1-hexadecanoyl-sn-glycero-3-phosphate + tetradecanoyl-CoA = 1-hexadecanoyl-2-tetradecanoyl-sn-glycero-3-phosphate + CoA. The enzyme catalyses (11Z)-octadecenoyl-CoA + 1-(9Z-octadecenoyl)-sn-glycero-3-phosphate = 1-(9Z)-octadecenoyl-2-(11Z)-octadecenoyl-sn-glycero-3-phosphate + CoA. Its pathway is phospholipid metabolism; CDP-diacylglycerol biosynthesis; CDP-diacylglycerol from sn-glycerol 3-phosphate: step 2/3. Its function is as follows. Converts 1-acyl-sn-glycerol-3-phosphate (lysophosphatidic acid or LPA) into 1,2-diacyl-sn-glycerol-3-phosphate (phosphatidic acid or PA) by incorporating an acyl moiety at the sn-2 position of the glycerol backbone. This chain is 1-acyl-sn-glycerol-3-phosphate acyltransferase beta (Agpat2), found in Mus musculus (Mouse).